The following is a 254-amino-acid chain: 3-deoxy-manno-octulosonate cytidylyltransferase (254 aa).

The protein belongs to the KdsB family.

The protein resides in the cytoplasm. It catalyses the reaction 3-deoxy-alpha-D-manno-oct-2-ulosonate + CTP = CMP-3-deoxy-beta-D-manno-octulosonate + diphosphate. It participates in nucleotide-sugar biosynthesis; CMP-3-deoxy-D-manno-octulosonate biosynthesis; CMP-3-deoxy-D-manno-octulosonate from 3-deoxy-D-manno-octulosonate and CTP: step 1/1. The protein operates within bacterial outer membrane biogenesis; lipopolysaccharide biosynthesis. In terms of biological role, activates KDO (a required 8-carbon sugar) for incorporation into bacterial lipopolysaccharide in Gram-negative bacteria. This Pseudomonas putida (strain W619) protein is 3-deoxy-manno-octulosonate cytidylyltransferase.